The chain runs to 206 residues: Urease accessory protein UreG (206 aa).

13–20 contacts GTP; it reads GPVGSGKT.

It belongs to the SIMIBI class G3E GTPase family. UreG subfamily. In terms of assembly, homodimer. UreD, UreF and UreG form a complex that acts as a GTP-hydrolysis-dependent molecular chaperone, activating the urease apoprotein by helping to assemble the nickel containing metallocenter of UreC. The UreE protein probably delivers the nickel.

It localises to the cytoplasm. Facilitates the functional incorporation of the urease nickel metallocenter. This process requires GTP hydrolysis, probably effectuated by UreG. This Natronomonas pharaonis (strain ATCC 35678 / DSM 2160 / CIP 103997 / JCM 8858 / NBRC 14720 / NCIMB 2260 / Gabara) (Halobacterium pharaonis) protein is Urease accessory protein UreG.